The sequence spans 305 residues: Phosphatidylinositol:ceramide inositolphosphotransferase 2 (305 aa).

6 helical membrane-spanning segments follow: residues 34-54 (LLAG…VHYI), 81-101 (ETVF…PFIL), 105-125 (KIYT…CQFL), 168-188 (VMYG…LVFV), 198-218 (RFIK…IIAS), and 221-241 (HYSV…FCLD). Residue H180 is part of the active site. Residues H221 and D225 contribute to the active site.

It belongs to the sphingomyelin synthase family. In terms of tissue distribution, expressed in leaves, roots, stems, flowers and siliques.

The protein resides in the golgi apparatus. It is found in the trans-Golgi network membrane. The catalysed reaction is an N-(2R-hydroxy-very-long-chain fatty acyl)-(R)-4-hydroxysphingoid base + a 1,2-diacyl-sn-glycero-3-phospho-(1D-myo-inositol) = a 1D-myo-inositol-1-phospho-N-[(R)-2-hydroxy-very-long-chain fatty acyl]-(R)-4-hydroxysphingoid base + a 1,2-diacyl-sn-glycerol. Its pathway is sphingolipid metabolism. Catalyzes the transfer of the phosphorylinositol group from phosphatidylinositol (PI) to phytoceramide, an essential step in sphingolipid biosynthesis. May play an important role in modulating plant programmed cell death (PCD) associated with defense (e.g. toward Golovinomyces cichoracearum) by promoting sphingolipid metabolism and thus regulating ceramide accumulation. The protein is Phosphatidylinositol:ceramide inositolphosphotransferase 2 of Arabidopsis thaliana (Mouse-ear cress).